The chain runs to 537 residues: Probable sterol O-acyltransferase 1 (537 aa).

The next 4 membrane-spanning stretches (helical) occupy residues Phe98–Ala118, Phe140–Leu160, Leu174–Val194, and Phe199–Phe219. N-linked (GlcNAc...) asparagine glycosylation is present at Asn250. The next 2 membrane-spanning stretches (helical) occupy residues Phe344–Ala364 and Ile384–Leu404. The FYXDWWN motif motif lies at Phe418 to Asn424. 2 consecutive transmembrane segments (helical) span residues Ala462–Thr482 and Val517–Phe537. His474 is a catalytic residue.

It belongs to the membrane-bound acyltransferase family. Sterol o-acyltransferase subfamily.

The protein resides in the endoplasmic reticulum membrane. In terms of biological role, sterol O-acyltransferase that catalyzes the formation of stery esters. The protein is Probable sterol O-acyltransferase 1 (are1) of Schizosaccharomyces pombe (strain 972 / ATCC 24843) (Fission yeast).